A 76-amino-acid chain; its full sequence is uncharacterized protein (76 aa).

Residues 18-38 (FISALFFFNAVCIVSDNLLII) traverse the membrane as a helical segment.

The protein resides in the cell membrane. This is an uncharacterized protein from Escherichia coli O6:H1 (strain CFT073 / ATCC 700928 / UPEC).